Here is a 212-residue protein sequence, read N- to C-terminus: Imidazole glycerol phosphate synthase subunit HisH (212 aa).

The Glutamine amidotransferase type-1 domain occupies 1 to 210; the sequence is MIAVINYGAG…VRWSEAVQPK (210 aa). Catalysis depends on Cys-79, which acts as the Nucleophile. Catalysis depends on residues His-185 and Glu-187.

As to quaternary structure, heterodimer of HisH and HisF.

The protein resides in the cytoplasm. The enzyme catalyses 5-[(5-phospho-1-deoxy-D-ribulos-1-ylimino)methylamino]-1-(5-phospho-beta-D-ribosyl)imidazole-4-carboxamide + L-glutamine = D-erythro-1-(imidazol-4-yl)glycerol 3-phosphate + 5-amino-1-(5-phospho-beta-D-ribosyl)imidazole-4-carboxamide + L-glutamate + H(+). It carries out the reaction L-glutamine + H2O = L-glutamate + NH4(+). Its pathway is amino-acid biosynthesis; L-histidine biosynthesis; L-histidine from 5-phospho-alpha-D-ribose 1-diphosphate: step 5/9. Its function is as follows. IGPS catalyzes the conversion of PRFAR and glutamine to IGP, AICAR and glutamate. The HisH subunit catalyzes the hydrolysis of glutamine to glutamate and ammonia as part of the synthesis of IGP and AICAR. The resulting ammonia molecule is channeled to the active site of HisF. The sequence is that of Imidazole glycerol phosphate synthase subunit HisH from Chloroflexus aurantiacus (strain ATCC 29364 / DSM 637 / Y-400-fl).